The sequence spans 162 residues: MKLDQVARSLLLKEFVSGFVLAMKYFFKPKATINYPFEMGHRGPRFRGEHALRRYPNGEERCIACKLCEAICPAQAITIEAGPRRNDGTRRTTRYDIDMVKCIYCGMCQEACPVDAIVEGPNFEFSVETREELLYDKQKLLENGDRWEREIARNIAVDAPYR.

4Fe-4S ferredoxin-type domains follow at residues 52–82 and 93–122; these read LRRY…IEAG and TRYD…EGPN. Residues Cys62, Cys65, Cys68, Cys72, Cys102, Cys105, Cys108, and Cys112 each coordinate [4Fe-4S] cluster.

Belongs to the complex I 23 kDa subunit family. As to quaternary structure, NDH-1 is composed of 14 different subunits. Subunits NuoA, H, J, K, L, M, N constitute the membrane sector of the complex. [4Fe-4S] cluster serves as cofactor.

Its subcellular location is the cell inner membrane. It carries out the reaction a quinone + NADH + 5 H(+)(in) = a quinol + NAD(+) + 4 H(+)(out). Its function is as follows. NDH-1 shuttles electrons from NADH, via FMN and iron-sulfur (Fe-S) centers, to quinones in the respiratory chain. The immediate electron acceptor for the enzyme in this species is believed to be ubiquinone. Couples the redox reaction to proton translocation (for every two electrons transferred, four hydrogen ions are translocated across the cytoplasmic membrane), and thus conserves the redox energy in a proton gradient. This is NADH-quinone oxidoreductase subunit I from Methylorubrum extorquens (strain PA1) (Methylobacterium extorquens).